The following is a 188-amino-acid chain: dCTP deaminase (188 aa).

K107–R112 is a dCTP binding site. E133 serves as the catalytic Proton donor/acceptor. DCTP contacts are provided by Q152, Y166, and Q176.

This sequence belongs to the dCTP deaminase family. Homotrimer.

The enzyme catalyses dCTP + H2O + H(+) = dUTP + NH4(+). Its pathway is pyrimidine metabolism; dUMP biosynthesis; dUMP from dCTP (dUTP route): step 1/2. Catalyzes the deamination of dCTP to dUTP. In Sulfurovum sp. (strain NBC37-1), this protein is dCTP deaminase.